The sequence spans 366 residues: Growth hormone secretagogue receptor type 1 (366 aa).

Over 1 to 40 the chain is Extracellular; it reads MWNATPSEEPGFNLTLADLDWDASPGNDSLGDELLQLFPA. N-linked (GlcNAc...) asparagine glycans are attached at residues N13 and N27. A helical membrane pass occupies residues 41-66; sequence PLLAGVTATCVALFVVGIAGNLLTML. Residues 67–72 lie on the Cytoplasmic side of the membrane; sequence VVSRFR. Residues 73-96 form a helical membrane-spanning segment; that stretch reads ELRTTTNLYLSSMAFSDLLIFLCM. Residues 97–117 are Extracellular-facing; it reads PLDLVRLWQYRPWNFGDLLCK. C116 and C198 are oxidised to a cystine. Residues 118–139 form a helical membrane-spanning segment; sequence LFQFVSESCTYATVLTITALSV. Over 140–162 the chain is Cytoplasmic; that stretch reads ERYFAICFPLRAKVVVTKGRVKL. Residues 163 to 183 traverse the membrane as a helical segment; that stretch reads VIFVIWAVAFCSAGPIFVLVG. At 184–211 the chain is on the extracellular side; it reads VEHENGTDPWDTNECRPTEFAVRSGLLT. A helical transmembrane segment spans residues 212–235; that stretch reads VMVWVSSIFFFLPVFCLTVLYSLI. At 236–263 the chain is on the cytoplasmic side; it reads GRKLWRRRRGDAVVGASLRDQNHKQTVK. The chain crosses the membrane as a helical span at residues 264–285; the sequence is MLAVVVFAFILCWLPFHVGRYL. Residues 286–302 lie on the Extracellular side of the membrane; it reads FSKSFEPGSLEIAQISQ. The chain crosses the membrane as a helical span at residues 303–326; that stretch reads YCNLVSFVLFYLSAAINPILYNIM. Topologically, residues 327-366 are cytoplasmic; that stretch reads SKKYRVAVFRLLGFEPFSQRKLSTLKDESSRAWTESSINT.

This sequence belongs to the G-protein coupled receptor 1 family. As to expression, pituitary and hypothalamus.

It is found in the cell membrane. In terms of biological role, receptor for ghrelin, coupled to G-alpha-11 proteins. Stimulates growth hormone secretion. Also binds other growth hormone releasing peptides (GHRP) (e.g. Met-enkephalin and GHRP-6) as well as non-peptide, low molecular weight secretagogues (e.g. L-692,429, MK-0677, adenosine). In Homo sapiens (Human), this protein is Growth hormone secretagogue receptor type 1 (GHSR).